A 103-amino-acid polypeptide reads, in one-letter code: Histone H4 variant TH091 (103 aa).

Residues 1 to 20 (MSGRDKGGKGLGKGGAKRHR) form a disordered region. The residue at position 2 (serine 2) is an N-acetylserine. 5 positions are modified to N6-acetyllysine: lysine 6, lysine 9, lysine 13, lysine 17, and lysine 21. The DNA-binding element occupies 17–21 (KRHRK).

This sequence belongs to the histone H4 family. As to quaternary structure, the nucleosome is a histone octamer containing two molecules each of H2A, H2B, H3 and H4 assembled in one H3-H4 heterotetramer and two H2A-H2B heterodimers. The octamer wraps approximately 147 bp of DNA.

The protein localises to the nucleus. It is found in the chromosome. Its function is as follows. Core component of nucleosome. Nucleosomes wrap and compact DNA into chromatin, limiting DNA accessibility to the cellular machineries which require DNA as a template. Histones thereby play a central role in transcription regulation, DNA repair, DNA replication and chromosomal stability. DNA accessibility is regulated via a complex set of post-translational modifications of histones, also called histone code, and nucleosome remodeling. This is Histone H4 variant TH091 from Triticum aestivum (Wheat).